The chain runs to 237 residues: Endonuclease V (237 aa).

The Mg(2+) site is built by Asp46 and Asp114.

Belongs to the endonuclease V family. Mg(2+) serves as cofactor.

Its subcellular location is the cytoplasm. It carries out the reaction Endonucleolytic cleavage at apurinic or apyrimidinic sites to products with a 5'-phosphate.. Functionally, DNA repair enzyme involved in the repair of deaminated bases. Selectively cleaves double-stranded DNA at the second phosphodiester bond 3' to a deoxyinosine leaving behind the intact lesion on the nicked DNA. In Xanthomonas axonopodis pv. citri (strain 306), this protein is Endonuclease V.